A 159-amino-acid polypeptide reads, in one-letter code: Mediator of RNA polymerase II transcription subunit 10 (159 aa).

The disordered stretch occupies residues Ser-54–Leu-77.

Belongs to the Mediator complex subunit 10 family. In terms of assembly, component of the Mediator complex.

Its subcellular location is the nucleus. In terms of biological role, component of the Mediator complex, a coactivator involved in the regulated transcription of nearly all RNA polymerase II-dependent genes. Mediator functions as a bridge to convey information from gene-specific regulatory proteins to the basal RNA polymerase II transcription machinery. Mediator is recruited to promoters by direct interactions with regulatory proteins and serves as a scaffold for the assembly of a functional preinitiation complex with RNA polymerase II and the general transcription factors. This is Mediator of RNA polymerase II transcription subunit 10 (nut2) from Aspergillus fumigatus (strain ATCC MYA-4609 / CBS 101355 / FGSC A1100 / Af293) (Neosartorya fumigata).